We begin with the raw amino-acid sequence, 308 residues long: Ribosomal RNA large subunit methyltransferase F (308 aa).

It belongs to the methyltransferase superfamily. METTL16/RlmF family.

It is found in the cytoplasm. The catalysed reaction is adenosine(1618) in 23S rRNA + S-adenosyl-L-methionine = N(6)-methyladenosine(1618) in 23S rRNA + S-adenosyl-L-homocysteine + H(+). In terms of biological role, specifically methylates the adenine in position 1618 of 23S rRNA. This is Ribosomal RNA large subunit methyltransferase F from Escherichia coli (strain SMS-3-5 / SECEC).